Reading from the N-terminus, the 463-residue chain is Matrix remodeling-associated protein 8 (463 aa).

Residues 1 to 19 (MELRAWVLLWRLVLLQSSA) form the signal peptide. Topologically, residues 20-362 (VLLSSGPSGP…PEGRAHFFQQ (343 aa)) are extracellular. Ig-like V-type domains follow at residues 29 to 173 (PATS…LEVT) and 176 to 308 (PRAA…LRVT). Disulfide bonds link cysteine 54–cysteine 153 and cysteine 202–cysteine 288. Asparagine 135 is a glycosylation site (N-linked (GlcNAc...) asparagine). At serine 244 the chain carries Phosphoserine. An RGD motif is present at residues 268–270 (RGD). Positions 309 to 341 (EPAARPPPPPRDSPGNGSSHSGAPGPGARDPTL) are disordered. Residues 321 to 335 (SPGNGSSHSGAPGPG) show a composition bias toward low complexity. Asparagine 324 carries an N-linked (GlcNAc...) asparagine glycan. A helical membrane pass occupies residues 363 to 383 (LGYVLATLLLFILLLITVVLA). Over 384 to 463 (TRQRRRGGYE…DKEFRKEYCK (80 aa)) the chain is Cytoplasmic.

Homodimer in cis. Does not appear to form trans-homodimers. Interacts with ITGB3; the interaction inhibits ITGAV:ITGB3 heterodimer formation.

The protein localises to the cell membrane. The protein resides in the cell junction. Its subcellular location is the tight junction. It is found in the cytoplasm. It localises to the cell projection. The protein localises to the cilium membrane. The protein resides in the nucleus. Its function is as follows. Transmembrane protein which can modulate activity of various signaling pathways, probably via binding to integrin ITGAV:ITGB3. Mediates heterophilic cell-cell interactions in vitro. Inhibits osteoclastogenesis downstream of TNFSF11/RANKL and CSF1, where it may function by attenuating signaling via integrin ITGB3 and MAP kinase p38. Plays a role in cartilage formation where it promotes proliferation and maturation of growth plate chondrocytes. Stimulates formation of primary cilia in chondrocytes. Enhances expression of genes involved in the hedgehog signaling pathway in chondrocytes, including the hedgehog signaling molecule IHH; may also promote signaling via the PTHLH/PTHrP pathway. Plays a role in angiogenesis where it suppresses migration of endothelial cells and also promotes their apoptosis. Inhibits VEGF-induced activation of AKT and p38 MAP kinase in endothelial cells. Also inhibits VTN (vitronectin)-mediated integrin ITGAV:ITGB3 signaling and activation of PTK2/FAK. May play a role in the maturation and maintenance of the blood-brain barrier. This Bos taurus (Bovine) protein is Matrix remodeling-associated protein 8 (MXRA8).